The following is a 255-amino-acid chain: UPF0246 protein CC_3385 (255 aa).

It belongs to the UPF0246 family.

The sequence is that of UPF0246 protein CC_3385 from Caulobacter vibrioides (strain ATCC 19089 / CIP 103742 / CB 15) (Caulobacter crescentus).